The chain runs to 132 residues: uncharacterized protein (132 aa).

Residues 1–68 are disordered; the sequence is MCSAGELLRG…HTGEPVGDDY (68 aa). A helical transmembrane segment spans residues 100–120; the sequence is VIVIFFWVMLWFLGLQALGLV.

The protein belongs to the FAM241 family.

It is found in the membrane. This is an uncharacterized protein from Homo sapiens (Human).